The following is a 168-amino-acid chain: uncharacterized protein (168 aa).

A helical transmembrane segment spans residues 36–56 (LNWWQLIVVVGIAISGIAAIA). N-linked (GlcNAc...) asparagine; by host glycosylation occurs at asparagine 74. The next 3 membrane-spanning stretches (helical) occupy residues 86 to 106 (FIII…LAWL), 115 to 135 (KLLT…ALTI), and 143 to 163 (MVKL…GFFI). N-linked (GlcNAc...) asparagine; by host glycosylation occurs at asparagine 164.

It is found in the membrane. This is an uncharacterized protein from Acanthamoeba polyphaga mimivirus (APMV).